The primary structure comprises 184 residues: Tumor necrosis factor alpha-induced protein 8-like protein 2 (184 aa).

At S3 the chain carries Phosphoserine.

This sequence belongs to the TNFAIP8 family. TNFAIP8L2 subfamily. May interact with CASP8; however, such result is unclear since could not reproduce the interaction with CASP8. Interacts with RAC1. Phosphorylated by TAK1/MAP3K7; this phosphorylation triggers association with BTRC and subsequent ubiquitination and degradation. Post-translationally, ubiquitinated in a BTRC-depdent manner; leading to degradation mediated through the proteasome pathway.

The protein localises to the cytoplasm. It localises to the nucleus. The protein resides in the lysosome. In terms of biological role, acts as a negative regulator of innate and adaptive immunity by maintaining immune homeostasis. Plays a regulatory role in the Toll-like signaling pathway by determining the strength of LPS-induced signaling and gene expression. Inhibits TCR-mediated T-cell activation and negatively regulate T-cell function to prevent hyperresponsiveness. Also inhibits autolysosome formation via negatively modulating MTOR activation by interacting with RAC1 and promoting the disassociation of the RAC1-MTOR complex. Plays an essential role in NK-cell biology by acting as a checkpoint and displaying an expression pattern correlating with NK-cell maturation process and by negatively regulating NK-cell maturation and antitumor immunity. Mechanistically, suppresses IL-15-triggered mTOR activity in NK-cells. In Rattus norvegicus (Rat), this protein is Tumor necrosis factor alpha-induced protein 8-like protein 2 (Tnfaip8l2).